We begin with the raw amino-acid sequence, 255 residues long: Endonuclease V (255 aa).

Residues Asp42 and Asp110 each coordinate Mg(2+).

Belongs to the endonuclease V family. Mg(2+) is required as a cofactor.

The protein localises to the cytoplasm. It carries out the reaction Endonucleolytic cleavage at apurinic or apyrimidinic sites to products with a 5'-phosphate.. In terms of biological role, DNA repair enzyme involved in the repair of deaminated bases. Selectively cleaves double-stranded DNA at the second phosphodiester bond 3' to a deoxyinosine leaving behind the intact lesion on the nicked DNA. This Aeropyrum pernix (strain ATCC 700893 / DSM 11879 / JCM 9820 / NBRC 100138 / K1) protein is Endonuclease V.